The sequence spans 372 residues: MRSKVTGAQRWVVKIGSALLTADGKGLDRTAMGVWVEQMVALHEAGVELVLVSSGAVAAGMSRLGWTARPSAMHELQAAAAIGQMGLVQAWESSFAEHGRHTAQILLTHDDLSDRKRYLNARSTLRALVELKVIPVINENDTVVTDEIRFGDNDTLAALVANLVEADLLVILTDRDGMFDADPRNNPDAQLIYEARADDPALDAVAGGTGGALGRGGMQTKLRAARLAARSGAHTIIVGGRLDRVLDRLKAGERIGTLLSPERGMLAARKQWLAGHLQTRGTLVLDEGAVSALSQGNKSLLPVGVKQVQGGFRRGEMVVCVAPDGREIARGLANYSALEAQKIIGQPSDAIVGVLGYMAEPELVHRDNLILV.

Residue Lys-14 participates in ATP binding. 3 residues coordinate substrate: Ser-54, Asp-141, and Asn-153. Residue 173–174 (TD) coordinates ATP. Positions 280-358 (RGTLVLDEGA…DAIVGVLGYM (79 aa)) constitute a PUA domain.

The protein belongs to the glutamate 5-kinase family.

It is found in the cytoplasm. It carries out the reaction L-glutamate + ATP = L-glutamyl 5-phosphate + ADP. The protein operates within amino-acid biosynthesis; L-proline biosynthesis; L-glutamate 5-semialdehyde from L-glutamate: step 1/2. Its function is as follows. Catalyzes the transfer of a phosphate group to glutamate to form L-glutamate 5-phosphate. The protein is Glutamate 5-kinase of Pseudomonas fluorescens (strain ATCC BAA-477 / NRRL B-23932 / Pf-5).